Here is a 364-residue protein sequence, read N- to C-terminus: DNA replication and repair protein RecF (364 aa).

30 to 37 (GNNAQGKT) serves as a coordination point for ATP.

It belongs to the RecF family.

The protein resides in the cytoplasm. The RecF protein is involved in DNA metabolism; it is required for DNA replication and normal SOS inducibility. RecF binds preferentially to single-stranded, linear DNA. It also seems to bind ATP. The sequence is that of DNA replication and repair protein RecF from Clostridium botulinum (strain ATCC 19397 / Type A).